A 1482-amino-acid polypeptide reads, in one-letter code: MHKLIIKYNKQLKMLNLRDGKTYTISEDERADITLKSLGEVIHLEQNNQGTWQANHTSINKVLVRKGDLDDITLQLYTEADYASFAYPSIQDTMTIGSNAYDDMVIQSLMNAIIIKDFQSIQETQYVRIVHDKNTDVYINYELQEQLTNKAYIGDHIYVEGIWLEVQADGLNVLSQNTVASSLIRLTQEMPHAQADDYNTYHRSPRIIHREPTDDIKIERPPQPIQKNNTVIWRSIIPPLVMIALTVVIFLVRPIGIYILMMIGMSTVTIVFGITTYFSEKKKYNKDVEKREKDYKAYLDNKSKEINKAIKAQRFSLNYHYPTVAEIKDIVETKAPRIYEKTSHHHDFLHYKLGIANVEKSFKLDYQEEEFNQRRDELFDDAKELYEFYTDVEQAPLINDLNHGPIAYIGARHLILEELEKMLIQLSTFHSYHDLEFLFVTREDEVETLKWARWLPHMTLRGQNIRGFVYNQRTRDQILTSIYSMIKERIQAVRERSRSNEQIIFTPQLVFVITDMSLIIDHVILEYVNQDLSEYGISLIFVEDVIESLPEHVDTIIDIKSRTEGELITKEKELVQLKFTPENIDNVDKEYIARRLANLIHVEHLKNAIPDSITFLEMYNVKEVDQLDVVNRWRQNETYKTMAVPLGVRGKDDILSLNLHEKAHGPHGLVAGTTGSGKSEIIQSYILSLAINFHPHEVAFLLIDYKGGGMANLFKDLVHLVGTITNLDGDEAMRALTSIKAELRKRQRLFGEHDVNHINQYHKLFKEGVATEPMPHLFIISDEFAELKSEQPDFMKELVSTARIGRSLGIHLILATQKPSGVVDDQIWSNSKFKLALKVQDRQDSNEILKTPDAADITLPGRAYLQVGNNEIYELFQSAWSGATYDIEGDKLEVEDKTIYMINDYGQLQAINKDLSGLEDEETKENQTELEAVIDHIESITTRLEIEEVKRPWLPPLPENVYQEDLVETDFRKLWSDDAKEVELTLGLKDVPEEQYQGPMVLQLKKAGHIALIGSPGYGRTTFLHNIIFDVARHHRPDQAHMYLFDFGTNGLMPVTDIPHVADYFTVDQEDKIAKAIRKIHDIISERKRLLSQERVVNIEQYNKETGNSIPNVFLIIDNYDTVKESPFMEEYEEMMSKVTREGLALGVYIILSGSRSSAIKSAIFTNIKTRVALYLFENNELTNIIGSYKKGVKDVKGRAAINDDNFTQFQIAQPFELAEGQTYNERIKNEVAQMKEFYVGDYPKHIPMMPDKVFMEDIREAYDLEKIIHEEHKLPLGLDFEDVELVSLDLTSSSIVTAIKPTEMEKMNDVIMSSLSVYSKNQFVILVDAEDNMSQYSEDVTSYYSAPSDLSNIRLGFKQEIEARKNGEKSIEECKIVFINNIKRFNQLTGMTEDEIRVLFNEGQKVNIIIIASGLYSDTIGAFDRESKMMVRTINQALISHKISEQEFIRVKDRFGEPELKVGEMYYINNQEYQKIKLMEG.

The Cytoplasmic segment spans residues 1 to 229 (MHKLIIKYNK…RPPQPIQKNN (229 aa)). Residues 230 to 252 (TVIWRSIIPPLVMIALTVVIFLV) form a helical membrane-spanning segment. The Extracellular portion of the chain corresponds to 253-256 (RPIG). A helical membrane pass occupies residues 257-279 (IYILMMIGMSTVTIVFGITTYFS). The Cytoplasmic portion of the chain corresponds to 280–1482 (EKKKYNKDVE…EYQKIKLMEG (1203 aa)). 2 FtsK domains span residues 652–846 (DDIL…QDSN) and 997–1183 (QGPM…NELT). ATP-binding positions include 672 to 679 (GTTGSGKS) and 1014 to 1021 (GSPGYGRT).

Belongs to the EssC family. Homooligomer. Interacts with EsaE.

It is found in the cell membrane. Functionally, component of the type VII secretion system (Ess). Required for the secretion of substrates including EsxA and EsxB. However, unable to support secretion of the substrate protein EsxC. This chain is Type VII secretion system protein EssC, found in Staphylococcus aureus (strain MRSA252).